A 235-amino-acid chain; its full sequence is Purine nucleoside phosphorylase DeoD-type (235 aa).

H4 serves as a coordination point for a purine D-ribonucleoside. Phosphate-binding positions include G20, R24, R43, and 87 to 90; that span reads RVGT. Residues 179–181 and 203–204 each bind a purine D-ribonucleoside; these read EME and SN.

It belongs to the PNP/UDP phosphorylase family. As to quaternary structure, homohexamer; trimer of homodimers.

It carries out the reaction a purine D-ribonucleoside + phosphate = a purine nucleobase + alpha-D-ribose 1-phosphate. It catalyses the reaction a purine 2'-deoxy-D-ribonucleoside + phosphate = a purine nucleobase + 2-deoxy-alpha-D-ribose 1-phosphate. In terms of biological role, catalyzes the reversible phosphorolytic breakdown of the N-glycosidic bond in the beta-(deoxy)ribonucleoside molecules, with the formation of the corresponding free purine bases and pentose-1-phosphate. This Levilactobacillus brevis (strain ATCC 367 / BCRC 12310 / CIP 105137 / JCM 1170 / LMG 11437 / NCIMB 947 / NCTC 947) (Lactobacillus brevis) protein is Purine nucleoside phosphorylase DeoD-type.